The chain runs to 340 residues: HPr kinase/phosphorylase (340 aa).

Catalysis depends on residues His153 and Lys174. ATP is bound at residue 168-175 (GNSGLGKS). Ser175 is a binding site for Mg(2+). Catalysis depends on Asp192, which acts as the Proton acceptor; for phosphorylation activity. Proton donor; for dephosphorylation activity. Positions 216 to 225 (MEIRGLGVVD) are important for the catalytic mechanism of both phosphorylation and dephosphorylation. Glu217 is a Mg(2+) binding site. Residue Arg258 is part of the active site. The important for the catalytic mechanism of dephosphorylation stretch occupies residues 279–284 (PINPGK).

This sequence belongs to the HPrK/P family. In terms of assembly, homohexamer. It depends on Mg(2+) as a cofactor.

The catalysed reaction is [HPr protein]-L-serine + ATP = [HPr protein]-O-phospho-L-serine + ADP + H(+). The enzyme catalyses [HPr protein]-O-phospho-L-serine + phosphate + H(+) = [HPr protein]-L-serine + diphosphate. In terms of biological role, catalyzes the ATP- as well as the pyrophosphate-dependent phosphorylation of a specific serine residue in HPr, a phosphocarrier protein of the phosphoenolpyruvate-dependent sugar phosphotransferase system (PTS). HprK/P also catalyzes the pyrophosphate-producing, inorganic phosphate-dependent dephosphorylation (phosphorolysis) of seryl-phosphorylated HPr (P-Ser-HPr). The protein is HPr kinase/phosphorylase of Prosthecochloris aestuarii (strain DSM 271 / SK 413).